The sequence spans 572 residues: Proline--tRNA ligase (572 aa).

The protein belongs to the class-II aminoacyl-tRNA synthetase family. ProS type 1 subfamily. In terms of assembly, homodimer.

The protein resides in the cytoplasm. The enzyme catalyses tRNA(Pro) + L-proline + ATP = L-prolyl-tRNA(Pro) + AMP + diphosphate. Functionally, catalyzes the attachment of proline to tRNA(Pro) in a two-step reaction: proline is first activated by ATP to form Pro-AMP and then transferred to the acceptor end of tRNA(Pro). As ProRS can inadvertently accommodate and process non-cognate amino acids such as alanine and cysteine, to avoid such errors it has two additional distinct editing activities against alanine. One activity is designated as 'pretransfer' editing and involves the tRNA(Pro)-independent hydrolysis of activated Ala-AMP. The other activity is designated 'posttransfer' editing and involves deacylation of mischarged Ala-tRNA(Pro). The misacylated Cys-tRNA(Pro) is not edited by ProRS. The sequence is that of Proline--tRNA ligase from Escherichia coli O157:H7.